A 346-amino-acid polypeptide reads, in one-letter code: MQFVDEANIRVEAGRGGNGVASFRREKYIPFGGPNGGDGGDGGSIYLIADRNINTLIDFRYTRDYKAQNGQAGMGQQKTGRAGQDLIIPVPEGTIVRDLDTQEMIGDLVEHGQKLLVAQGGRHGLGNVHFKSSTNRTPRQCTPGEPGDERNLGLELSVLADVGLLGMPNAGKSSLITAVSAARPKVANYPFTTLYPNLGVVRVSPESSFVIADIPGLIEGASEGAGLGVQFLKHLSRTGLLLHVVDIAPMDGVDPVESVHVIEKELEKYSDALAGKERWLVLNKTDLLLEEEASELCDQIVERLNWTGPVFAISAVNRVGTDDLVKEVAYGLEQNRLKAQEESVEE.

One can recognise an Obg domain in the interval methionine 1–leucine 159. Residues asparagine 127–glutamate 149 form a disordered region. Residues phenylalanine 130–glutamine 140 show a composition bias toward polar residues. Residues alanine 160–glutamate 333 enclose the OBG-type G domain. GTP-binding positions include glycine 166 to serine 173, phenylalanine 191 to tyrosine 195, aspartate 213 to glycine 216, asparagine 283 to aspartate 286, and serine 314 to valine 316. Mg(2+)-binding residues include serine 173 and threonine 193.

The protein belongs to the TRAFAC class OBG-HflX-like GTPase superfamily. OBG GTPase family. As to quaternary structure, monomer. Requires Mg(2+) as cofactor.

Its subcellular location is the cytoplasm. In terms of biological role, an essential GTPase which binds GTP, GDP and possibly (p)ppGpp with moderate affinity, with high nucleotide exchange rates and a fairly low GTP hydrolysis rate. Plays a role in control of the cell cycle, stress response, ribosome biogenesis and in those bacteria that undergo differentiation, in morphogenesis control. The protein is GTPase Obg of Hydrogenovibrio crunogenus (strain DSM 25203 / XCL-2) (Thiomicrospira crunogena).